A 123-amino-acid polypeptide reads, in one-letter code: UPF0342 protein LAR_1202 (123 aa).

Belongs to the UPF0342 family.

This chain is UPF0342 protein LAR_1202, found in Limosilactobacillus reuteri subsp. reuteri (strain JCM 1112) (Lactobacillus reuteri).